Reading from the N-terminus, the 99-residue chain is Aspartyl/glutamyl-tRNA(Asn/Gln) amidotransferase subunit C (99 aa).

The protein belongs to the GatC family. In terms of assembly, heterotrimer of A, B and C subunits.

It carries out the reaction L-glutamyl-tRNA(Gln) + L-glutamine + ATP + H2O = L-glutaminyl-tRNA(Gln) + L-glutamate + ADP + phosphate + H(+). The enzyme catalyses L-aspartyl-tRNA(Asn) + L-glutamine + ATP + H2O = L-asparaginyl-tRNA(Asn) + L-glutamate + ADP + phosphate + 2 H(+). Functionally, allows the formation of correctly charged Asn-tRNA(Asn) or Gln-tRNA(Gln) through the transamidation of misacylated Asp-tRNA(Asn) or Glu-tRNA(Gln) in organisms which lack either or both of asparaginyl-tRNA or glutaminyl-tRNA synthetases. The reaction takes place in the presence of glutamine and ATP through an activated phospho-Asp-tRNA(Asn) or phospho-Glu-tRNA(Gln). The chain is Aspartyl/glutamyl-tRNA(Asn/Gln) amidotransferase subunit C from Polaromonas sp. (strain JS666 / ATCC BAA-500).